The sequence spans 966 residues: Alpha-1,4 glucan phosphorylase L-1 isozyme, chloroplastic/amyloplastic (966 aa).

A chloroplast-targeting transit peptide spans 1 to 50 (MATANGAHLFNHYSSNSRFIHFTSRNTSSKLFLTKTSHFRRPKRCFHVNN). At lysine 812 the chain carries N6-(pyridoxal phosphate)lysine.

It belongs to the glycogen phosphorylase family. The cofactor is pyridoxal 5'-phosphate. Tuber.

Its subcellular location is the plastid. The protein localises to the chloroplast. The protein resides in the amyloplast. It carries out the reaction [(1-&gt;4)-alpha-D-glucosyl](n) + phosphate = [(1-&gt;4)-alpha-D-glucosyl](n-1) + alpha-D-glucose 1-phosphate. Functionally, phosphorylase is an important allosteric enzyme in carbohydrate metabolism. Enzymes from different sources differ in their regulatory mechanisms and in their natural substrates. However, all known phosphorylases share catalytic and structural properties. This is Alpha-1,4 glucan phosphorylase L-1 isozyme, chloroplastic/amyloplastic from Solanum tuberosum (Potato).